Reading from the N-terminus, the 316-residue chain is Ribosomal RNA small subunit methyltransferase H (316 aa).

S-adenosyl-L-methionine contacts are provided by residues 35–37 (AGH), Asp55, Phe84, Asp105, and Gln112.

This sequence belongs to the methyltransferase superfamily. RsmH family.

It localises to the cytoplasm. The catalysed reaction is cytidine(1402) in 16S rRNA + S-adenosyl-L-methionine = N(4)-methylcytidine(1402) in 16S rRNA + S-adenosyl-L-homocysteine + H(+). Specifically methylates the N4 position of cytidine in position 1402 (C1402) of 16S rRNA. The sequence is that of Ribosomal RNA small subunit methyltransferase H from Streptococcus sanguinis (strain SK36).